The primary structure comprises 496 residues: DNA-directed DNA/RNA polymerase mu (496 aa).

A disordered region spans residues 1 to 22; it reads MLPKRRRVRAGSPHSAVASSTP. A Phosphoserine modification is found at Ser-12. The segment covering 12-22 has biased composition (low complexity); the sequence is SPHSAVASSTP. The BRCT domain maps to 23 to 122; the sequence is PSVVRFPDVA…QPVPEEGRHH (100 aa). Na(+) is bound by residues Thr-241 and Val-243. The tract at residues 323–332 is involved in ssDNA binding; that stretch reads RGKLQGHDVD. Mg(2+)-binding residues include Asp-330, Asp-332, and Asp-420.

Belongs to the DNA polymerase type-X family. Requires Mg(2+) as cofactor.

It is found in the nucleus. It catalyses the reaction DNA(n) + a 2'-deoxyribonucleoside 5'-triphosphate = DNA(n+1) + diphosphate. Gap-filling polymerase involved in repair of DNA double-strand breaks by non-homologous end joining (NHEJ). Participates in immunoglobulin (Ig) light chain gene rearrangement in V(D)J recombination. The protein is DNA-directed DNA/RNA polymerase mu (Polm) of Mus musculus (Mouse).